A 200-amino-acid polypeptide reads, in one-letter code: Dephospho-CoA kinase (200 aa).

The 195-residue stretch at 6 to 200 (AIALSGGIAT…KIKAKYLEKK (195 aa)) folds into the DPCK domain. 14 to 19 (ATGKST) lines the ATP pocket.

The protein belongs to the CoaE family.

It localises to the cytoplasm. It carries out the reaction 3'-dephospho-CoA + ATP = ADP + CoA + H(+). It functions in the pathway cofactor biosynthesis; coenzyme A biosynthesis; CoA from (R)-pantothenate: step 5/5. Functionally, catalyzes the phosphorylation of the 3'-hydroxyl group of dephosphocoenzyme A to form coenzyme A. This chain is Dephospho-CoA kinase, found in Sulfurimonas denitrificans (strain ATCC 33889 / DSM 1251) (Thiomicrospira denitrificans (strain ATCC 33889 / DSM 1251)).